The following is a 507-amino-acid chain: uncharacterized protein (507 aa).

A run of 12 helical transmembrane segments spans residues 11 to 31, 97 to 117, 125 to 145, 149 to 169, 187 to 207, 209 to 229, 283 to 303, 326 to 346, 354 to 374, 388 to 408, 423 to 443, and 452 to 472; these read ILCF…IFPI, AWIA…YGHL, PVSF…GFAP, VFAV…IVFY, FFNW…CGYW, SAAI…LWLP, LFSS…WFST, FVQA…DLFI, LHQV…ALMI, LAII…WDAC, IGIG…PQMA, and IPYI…CFFL.

The protein belongs to the major facilitator superfamily.

The protein resides in the membrane. This is an uncharacterized protein from Caenorhabditis elegans.